The primary structure comprises 324 residues: Olfactory receptor 5A2 (324 aa).

Topologically, residues 1 to 26 (MAVGRNNTIVTKFILLGLSDHPQMKI) are extracellular. N-linked (GlcNAc...) asparagine glycosylation is present at N6. The helical transmembrane segment at 27-47 (FLFMLFLGLYLLTLAWNLSLI) threads the bilayer. Residues 48–55 (ALIKMDSH) lie on the Cytoplasmic side of the membrane. Residues 56 to 76 (LHMPMYFFLSNLSFLDICYVS) form a helical membrane-spanning segment. The Extracellular segment spans residues 77 to 100 (STAPKMLSDIITEQKTISFVGCAT). C98 and C190 are disulfide-bonded. Residues 101–121 (QYFVFCGMGLTECFLLAAMAY) form a helical membrane-spanning segment. Residues 122–134 (DRYAAICNPLLYT) lie on the Cytoplasmic side of the membrane. The helical transmembrane segment at 135–155 (VLISHTLCLKMVVGAYVGGFL) threads the bilayer. The Extracellular portion of the chain corresponds to 156-197 (SSFIETYSVYQHDFCGPYMINHFFCDLPPVLALSCSDTFTSE). Residues 198-218 (VVTFIVSVVVGIVSVLVVLIS) traverse the membrane as a helical segment. Over 219 to 238 (YGYIVAAVVKISSATGRTKA) the chain is Cytoplasmic. The chain crosses the membrane as a helical span at residues 239–259 (FSTCASHLTAVTLFYGSGFFM). The Extracellular segment spans residues 260–272 (YMRPSSSYSLNRD). A helical transmembrane segment spans residues 273-293 (KVVSIFYALVIPVVNPIIYSF). Residues 294-324 (RNKEIKNAMRKAMERDPGISHGGPFIFMTLG) lie on the Cytoplasmic side of the membrane.

Belongs to the G-protein coupled receptor 1 family.

Its subcellular location is the cell membrane. Functionally, odorant receptor. The polypeptide is Olfactory receptor 5A2 (OR5A2) (Homo sapiens (Human)).